The primary structure comprises 731 residues: Catalase-peroxidase (731 aa).

The tract at residues 1 to 23 (MSDLKCPFSGHTGAVTPAGNTNN) is disordered. Residues 95–218 (WHSAGTYRTG…LAAVEMGLIY (124 aa)) constitute a cross-link (tryptophyl-tyrosyl-methioninium (Trp-Tyr) (with M-244)). The active-site Proton acceptor is the His96. The tryptophyl-tyrosyl-methioninium (Tyr-Met) (with W-95) cross-link spans 218-244 (YVNPEGPHGEPDPVASGRDVRETFARM). Residue His259 coordinates heme b.

It belongs to the peroxidase family. Peroxidase/catalase subfamily. In terms of assembly, homodimer or homotetramer. Heme b serves as cofactor. Post-translationally, formation of the three residue Trp-Tyr-Met cross-link is important for the catalase, but not the peroxidase activity of the enzyme.

It carries out the reaction H2O2 + AH2 = A + 2 H2O. The enzyme catalyses 2 H2O2 = O2 + 2 H2O. Its function is as follows. Bifunctional enzyme with both catalase and broad-spectrum peroxidase activity. This chain is Catalase-peroxidase, found in Synechococcus sp. (strain WH7803).